The primary structure comprises 144 residues: MEREGSGGSGGSAGLLQQILSLKVVPRVGNGTLCPNSTSLCSFPEMWYGVFLWALVSSLFFHVPAGLLALFTLRHHKYGRFMSVSILLMGIVGPITAGILTSAAIAGVYRAAGKEMIPFEALTLGTGQTFCVLVVSFLRILATL.

Topologically, residues 1-50 (MEREGSGGSGGSAGLLQQILSLKVVPRVGNGTLCPNSTSLCSFPEMWYGV) are lumenal. N-linked (GlcNAc...) asparagine glycans are attached at residues asparagine 30 and asparagine 36. A helical membrane pass occupies residues 51 to 71 (FLWALVSSLFFHVPAGLLALF). The Cytoplasmic segment spans residues 72 to 85 (TLRHHKYGRFMSVS). Residues 86–106 (ILLMGIVGPITAGILTSAAIA) form a helical membrane-spanning segment. Residues 107-116 (GVYRAAGKEM) lie on the Lumenal side of the membrane. The chain crosses the membrane as a helical span at residues 117 to 137 (IPFEALTLGTGQTFCVLVVSF). Over 138 to 144 (LRILATL) the chain is Cytoplasmic.

The protein belongs to the TMEM170 family. As to quaternary structure, interacts with RTN4.

The protein localises to the endoplasmic reticulum membrane. The protein resides in the nucleus envelope. In terms of biological role, acts as a regulator of endoplasmic reticulum (ER) and nuclear envelope (NE) morphogenesis. Affects the ratio between tubular ER and ER sheets by promoting sheet formation at the expense of tubules. Influences NE expansion, nuclear pore complex formation and proper localization of inner nuclear membrane proteins. The protein is Transmembrane protein 170A (TMEM170A) of Homo sapiens (Human).